The primary structure comprises 97 residues: Protein RnfH (97 aa).

It belongs to the UPF0125 (RnfH) family.

This chain is Protein RnfH, found in Halorhodospira halophila (strain DSM 244 / SL1) (Ectothiorhodospira halophila (strain DSM 244 / SL1)).